A 537-amino-acid polypeptide reads, in one-letter code: Exoglucanase 1 (537 aa).

The signal sequence occupies residues 1-18 (MKGSISYQIYKGALLLSA). A catalytic region spans residues 19-453 (LLNSVSAQQV…YVIYSNIKTG (435 aa)). The N-linked (GlcNAc...) asparagine glycan is linked to Asn-136. Catalysis depends on Glu-235, which acts as the Nucleophile. Glu-240 functions as the Proton donor in the catalytic mechanism. Asn-414 and Asn-456 each carry an N-linked (GlcNAc...) asparagine glycan. Residues 454–477 (PLNSTFTGGTTSSSSTTTTTSKST) form a linker region. Residues 458–502 (TFTGGTTSSSSTTTTTSKSTSTSSSSKTTTTVTTTTTSSGSSGTG) are compositionally biased toward low complexity. Residues 458–503 (TFTGGTTSSSSTTTTTSKSTSTSSSSKTTTTVTTTTTSSGSSGTGA) form a disordered region. A CBM1 domain is found at 501 to 537 (TGARDWAQCGGNGWTGPTTCVSPYTCTKQNDWYSQCL). Disulfide bonds link Cys-509-Cys-526 and Cys-520-Cys-536.

This sequence belongs to the glycosyl hydrolase 7 (cellulase C) family.

It is found in the secreted. It carries out the reaction Hydrolysis of (1-&gt;4)-beta-D-glucosidic linkages in cellulose and cellotetraose, releasing cellobiose from the non-reducing ends of the chains.. In Penicillium janthinellum (Penicillium vitale), this protein is Exoglucanase 1 (cbh1).